The primary structure comprises 366 residues: MAGSSVTPTPLLKDELDIVIPTIRNLDFLEMWRPFFQPYHLIIVQDGDPSKIINVPEGFDYELYNRNDINRILGPKASCISFKDSACRCFGYMVSKKKYIYTIDDDCFVAKDPSGKDINALEQHIKNLLCPSTPHFFNTLYDPYREGADFVRGYPFSMREGAATAVSHGLWLNIPDYDAPTQLVKPRERNTRYVDAVMTIPKGTLFPMCGMNLAFDRELIGPAMYFGLMGDGQPIGRYDDMWAGWCIKVICDHLGLGVKTGLPYIWHSKASNPFVNLKKEYKGIYWQEEIIPFSQSATLPKDCTSVQQCYLELSKQVKEKLSTIDPYFTKLADAMVTWIEAWDELNPTGEGLAKLPSRTAPESRLH.

The DXD motif signature appears at 104–106 (DDD). Arg-152 is a glycosylation site (N-linked (Glc...) arginine).

This sequence belongs to the RGP family. As to quaternary structure, homopentamer or homohexamer. Mn(2+) serves as cofactor. It depends on Mg(2+) as a cofactor. In terms of processing, reversibly glycosylated by UDP-glucose, UDP-xylose and UDP-galactose, but not UDP-mannose. Expressed in all tissues tested, including root, tuber, leaf, petiole, shoot, stolon and stem.

The protein resides in the secreted. The protein localises to the cell wall. It localises to the cell junction. It is found in the plasmodesma. Its subcellular location is the golgi apparatus. It catalyses the reaction UDP-beta-L-arabinofuranose = UDP-beta-L-arabinopyranose. Functionally, probable UDP-L-arabinose mutase involved in the biosynthesis of cell wall non-cellulosic polysaccharides. Was initially shown to possess an autoglycosylating activity which is dependent on the presence of UDP-glucose and manganese. The sequence is that of Probable UDP-arabinopyranose mutase 2 from Solanum tuberosum (Potato).